Reading from the N-terminus, the 198-residue chain is Penicillin-binding protein activator LpoB (198 aa).

An N-terminal signal peptide occupies residues 1–19; that stretch reads MIRSVNRTGALMMALILSG. Cys20 is lipidated: N-palmitoyl cysteine. The S-diacylglycerol cysteine moiety is linked to residue Cys20. Residues 26–37 show a composition bias toward low complexity; it reads QPAPVEPTQPVE. Residues 26 to 59 are disordered; that stretch reads QPAPVEPTQPVEPVQPVPQPEQPIPQPQPVPQPP. Residues 38-59 are compositionally biased toward pro residues; the sequence is PVQPVPQPEQPIPQPQPVPQPP.

The protein belongs to the LpoB family. As to quaternary structure, interacts with PBP1b.

It localises to the cell outer membrane. Its function is as follows. Regulator of peptidoglycan synthesis that is essential for the function of penicillin-binding protein 1B (PBP1b). This Pantoea ananatis (strain LMG 20103) protein is Penicillin-binding protein activator LpoB.